Reading from the N-terminus, the 545-residue chain is CTP synthase (545 aa).

The tract at residues Met1–Leu265 is amidoligase domain. CTP is bound at residue Ser13. UTP is bound at residue Ser13. An ATP-binding site is contributed by Ser14–Ile19. Tyr54 lines the L-glutamine pocket. Asp71 contributes to the ATP binding site. Residues Asp71 and Glu139 each coordinate Mg(2+). CTP is bound by residues Asp146–Glu148, Lys186–Gln191, and Lys222. UTP contacts are provided by residues Lys186–Gln191 and Lys222. The region spanning Thr290–Ala541 is the Glutamine amidotransferase type-1 domain. L-glutamine is bound at residue Gly351. Catalysis depends on Cys378, which acts as the Nucleophile; for glutamine hydrolysis. L-glutamine-binding positions include Leu379–Gln382, Glu402, and Arg469. Residues His514 and Glu516 contribute to the active site.

It belongs to the CTP synthase family. As to quaternary structure, homotetramer.

The catalysed reaction is UTP + L-glutamine + ATP + H2O = CTP + L-glutamate + ADP + phosphate + 2 H(+). The enzyme catalyses L-glutamine + H2O = L-glutamate + NH4(+). It catalyses the reaction UTP + NH4(+) + ATP = CTP + ADP + phosphate + 2 H(+). Its pathway is pyrimidine metabolism; CTP biosynthesis via de novo pathway; CTP from UDP: step 2/2. Allosterically activated by GTP, when glutamine is the substrate; GTP has no effect on the reaction when ammonia is the substrate. The allosteric effector GTP functions by stabilizing the protein conformation that binds the tetrahedral intermediate(s) formed during glutamine hydrolysis. Inhibited by the product CTP, via allosteric rather than competitive inhibition. Its function is as follows. Catalyzes the ATP-dependent amination of UTP to CTP with either L-glutamine or ammonia as the source of nitrogen. Regulates intracellular CTP levels through interactions with the four ribonucleotide triphosphates. The polypeptide is CTP synthase (Alcanivorax borkumensis (strain ATCC 700651 / DSM 11573 / NCIMB 13689 / SK2)).